A 341-amino-acid polypeptide reads, in one-letter code: Tetraacyldisaccharide 4'-kinase (341 aa).

ATP is bound at residue Thr-57–Thr-64.

Belongs to the LpxK family.

It carries out the reaction a lipid A disaccharide + ATP = a lipid IVA + ADP + H(+). It functions in the pathway glycolipid biosynthesis; lipid IV(A) biosynthesis; lipid IV(A) from (3R)-3-hydroxytetradecanoyl-[acyl-carrier-protein] and UDP-N-acetyl-alpha-D-glucosamine: step 6/6. Functionally, transfers the gamma-phosphate of ATP to the 4'-position of a tetraacyldisaccharide 1-phosphate intermediate (termed DS-1-P) to form tetraacyldisaccharide 1,4'-bis-phosphate (lipid IVA). The chain is Tetraacyldisaccharide 4'-kinase from Maricaulis maris (strain MCS10) (Caulobacter maris).